A 468-amino-acid chain; its full sequence is Uronate isomerase (468 aa).

Belongs to the metallo-dependent hydrolases superfamily. Uronate isomerase family.

It carries out the reaction D-glucuronate = D-fructuronate. It catalyses the reaction aldehydo-D-galacturonate = keto-D-tagaturonate. It participates in carbohydrate metabolism; pentose and glucuronate interconversion. The chain is Uronate isomerase from Bacteroides thetaiotaomicron (strain ATCC 29148 / DSM 2079 / JCM 5827 / CCUG 10774 / NCTC 10582 / VPI-5482 / E50).